The following is a 361-amino-acid chain: Deoxyhypusine hydroxylase (361 aa).

HEAT-like PBS-type repeat units lie at residues 59–85 (LKHELAYVLGQLLNTRALPTLSRVLEN), 94–120 (VRHEAAEALGAIGAEESLPILRKYMQD), 183–211 (QRYRAMFALRDFGAGSKEAVEALADGFRD), and 216–242 (FRHEIAYIFGQLSSPYSIPSLLSRLRD). 4 residues coordinate Fe cation: His-61, Glu-62, His-96, and Glu-97. 4 residues coordinate Fe cation: His-218, Glu-219, His-251, and Glu-252.

The protein belongs to the deoxyhypusine hydroxylase family. Fe(2+) is required as a cofactor.

It localises to the cytoplasm. It is found in the nucleus. It catalyses the reaction [eIF5A protein]-deoxyhypusine + AH2 + O2 = [eIF5A protein]-hypusine + A + H2O. It participates in protein modification; eIF5A hypusination. Functionally, catalyzes the hydroxylation of the N(6)-(4-aminobutyl)-L-lysine intermediate to form hypusine, an essential post-translational modification only found in mature eIF-5A factor. In Cryptococcus neoformans var. neoformans serotype D (strain JEC21 / ATCC MYA-565) (Filobasidiella neoformans), this protein is Deoxyhypusine hydroxylase.